The primary structure comprises 698 residues: FHF complex subunit HOOK-interacting protein 2B (698 aa).

The protein belongs to the FHIP family.

The polypeptide is FHF complex subunit HOOK-interacting protein 2B (fhip2b) (Xenopus tropicalis (Western clawed frog)).